A 278-amino-acid polypeptide reads, in one-letter code: Release factor glutamine methyltransferase (278 aa).

Residues 117 to 121, Asp140, and Asn184 contribute to the S-adenosyl-L-methionine site; that span reads GTGSG. Substrate is bound at residue 184 to 187; it reads NPPY.

It belongs to the protein N5-glutamine methyltransferase family. PrmC subfamily.

It catalyses the reaction L-glutaminyl-[peptide chain release factor] + S-adenosyl-L-methionine = N(5)-methyl-L-glutaminyl-[peptide chain release factor] + S-adenosyl-L-homocysteine + H(+). Functionally, methylates the class 1 translation termination release factors RF1/PrfA and RF2/PrfB on the glutamine residue of the universally conserved GGQ motif. The polypeptide is Release factor glutamine methyltransferase (Staphylococcus aureus (strain NCTC 8325 / PS 47)).